Here is a 496-residue protein sequence, read N- to C-terminus: Angiopoietin-2 (496 aa).

An N-terminal signal peptide occupies residues 1–18 (MWQIIFLTFGWDLVLASA). Asn89, Asn119, Asn133, Asn151, Asn240, and Asn304 each carry an N-linked (GlcNAc...) asparagine glycan. Residues 159–256 (QLLQHSISTN…QQHDLMETVN (98 aa)) are a coiled coil. A Fibrinogen C-terminal domain is found at 275–495 (KEEQTTFRDC…ATTMMIRPAD (221 aa)). Cys284 and Cys313 are oxidised to a cystine. Residues Asp429, Asp431, Cys433, and Cys435 each contribute to the Ca(2+) site. Cystine bridges form between Cys433–Cys435 and Cys437–Cys450.

As to quaternary structure, interacts with TEK/TIE2, competing for the same binding site as ANGPT1. Interacts with ITGA5. Interacts with SVEP1/polydom. Interacts with THBD; this interaction significantly inhibits the generation of activated PC and TAFIa/CPB2 by the thrombin/thrombomodulin complex. In terms of tissue distribution, expressed in the ovary, uterus and placenta.

The protein resides in the secreted. Its function is as follows. Binds to TEK/TIE2, competing for the ANGPT1 binding site, and modulating ANGPT1 signaling. Can induce tyrosine phosphorylation of TEK/TIE2 in the absence of ANGPT1. In the absence of angiogenic inducers, such as VEGF, ANGPT2-mediated loosening of cell-matrix contacts may induce endothelial cell apoptosis with consequent vascular regression. In concert with VEGF, it may facilitate endothelial cell migration and proliferation, thus serving as a permissive angiogenic signal. Involved in the regulation of lymphangiogenesis. This Mus musculus (Mouse) protein is Angiopoietin-2 (Angpt2).